Consider the following 642-residue polypeptide: METVVRRCPFLSRVPQAFLQKAGKSLLFYAQNCPKMMEVGAKPAPRTVSTSAAQCQQVKETPPANEKEKTAKAAVQQAPDESQMAQTPDGTQLPPGHPSPSTSQSSGSKCPFLAAQLSQTGSSVFRKASLELQEDVQEMHAVRKEVAQSPVLPSLVNAKRDGEGPSPLLKNFQDIMRKQRPERVSHLLQDNLPKSVSTFQYDHFFEKKIDEKKNDHTYRVFKTVNRRAQIFPMADDYTDSLITKKQVSVWCSNDYLGMSRHPRVCGAVIETVKQHGAGAGGTRNISGTSKFHVELEQELADLHGKDAALLFSSCFVANDSTLFTLAKMMPGCEIYSDSGNHASMIQGIRNSRVPKYIFRHNDVNHLRELLQRSDPSVPKIVAFETVHSMDGAVCPLEELCDVAHEFGAITFVDEVHAVGLYGASGGGIGDRDGVMPKMDIISGTLGKAFGCVGGYIASTSLLIDTVRSYAAGFIFTTSLPPMLLAGALESVRILKSNEGRALRRQHQRNVKLMRQMLMDAGLPVIHCPSHIIPVRVADAAKNTEICDELMTRHNIYVQAINYPTVPRGEELLRIAPTPHHTPQMMNFFLEKLLLTWKRVGLELKPHSSAECNFCRRPLHFEVMSEREKAYFSGMSKMVSAQA.

Residues 1–56 (METVVRRCPFLSRVPQAFLQKAGKSLLFYAQNCPKMMEVGAKPAPRTVSTSAAQCQ) constitute a mitochondrion transit peptide. The interval 51-109 (SAAQCQQVKETPPANEKEKTAKAAVQQAPDESQMAQTPDGTQLPPGHPSPSTSQSSGSK) is disordered. Polar residues predominate over residues 79-90 (PDESQMAQTPDG). Low complexity predominate over residues 99–108 (SPSTSQSSGS). 3 residues coordinate substrate: arginine 219, serine 336, and lysine 355. Serine 388, histidine 416, and threonine 444 together coordinate pyridoxal 5'-phosphate. Lysine 447 is a catalytic residue. Lysine 447 carries the post-translational modification N6-(pyridoxal phosphate)lysine. Pyridoxal 5'-phosphate is bound by residues threonine 476 and threonine 477. Position 564 (threonine 564) interacts with substrate. At proline 578 the chain carries Hydroxyproline.

This sequence belongs to the class-II pyridoxal-phosphate-dependent aminotransferase family. Homodimer. Interacts (hydroxylated form) with VHL. Pyridoxal 5'-phosphate serves as cofactor. In terms of processing, in normoxia, is hydroxylated at Pro-578, promoting interaction with VHL, initiating ubiquitination and subsequent degradation via the proteasome. Ubiquitinated; in normoxia following hydroxylation and interaction with VHL, leading to its subsequent degradation via the proteasome. In terms of tissue distribution, expressed in the liver, kidney, brain and testis.

The protein localises to the mitochondrion inner membrane. It catalyses the reaction succinyl-CoA + glycine + H(+) = 5-aminolevulinate + CO2 + CoA. Its pathway is porphyrin-containing compound metabolism; protoporphyrin-IX biosynthesis; 5-aminolevulinate from glycine: step 1/1. Functionally, catalyzes the pyridoxal 5'-phosphate (PLP)-dependent condensation of succinyl-CoA and glycine to form aminolevulinic acid (ALA), with CoA and CO2 as by-products. The chain is 5-aminolevulinate synthase, non-specific, mitochondrial (Alas1) from Rattus norvegicus (Rat).